A 206-amino-acid polypeptide reads, in one-letter code: Sclerostin domain-containing protein 1 (206 aa).

A signal peptide spans 1-23 (MLPPAIHLSLIPLLCILMKNCLA). The interval 42–62 (AHPSSNSTLNQARNGGRHFSS) is disordered. Polar residues predominate over residues 43–62 (HPSSNSTLNQARNGGRHFSS). Asn47 carries N-linked (GlcNAc...) asparagine glycosylation. Cystine bridges form between Cys75-Cys133, Cys89-Cys147, Cys100-Cys163, and Cys104-Cys165. The 96-residue stretch at 75–170 (CRELRSTKYI…TACKCKRYTR (96 aa)) folds into the CTCK domain. Asn173 carries N-linked (GlcNAc...) asparagine glycosylation. The segment at 176–206 (SHNFESVSPAKPAQHHRERKRASKSSKHSLS) is disordered. Over residues 188–206 (AQHHRERKRASKSSKHSLS) the composition is skewed to basic residues.

The protein belongs to the sclerostin family. In terms of assembly, interacts with BMP2, BMP4, BMP6 and BMP7 with high affinity. As to expression, highly expressed within the maximally sensitized/receptive endometrium. Weakly expressed in brain, kidney and the female reproductive tract. Expressed in the dermal papilla (DP) and at high level in the precortex of both anagen vibrissae and pelage follicles. Dynymic expression during the hair cycle.

The protein resides in the secreted. Its function is as follows. Directly antagonizes activity of BMP2, BMP4, BMP6 and BMP7 in a dose-dependent manner. May be involved in the onset of endometrial receptivity for implantation/sensitization for the decidual cell reaction. Enhances Wnt signaling and inhibits TGF-beta signaling. This chain is Sclerostin domain-containing protein 1 (Sostdc1), found in Rattus norvegicus (Rat).